Consider the following 80-residue polypeptide: RNA-binding protein Hfq (80 aa).

The Sm domain occupies 9–69 (DVFLNQVRKE…ISTILPITPI (61 aa)).

Belongs to the Hfq family. In terms of assembly, homohexamer.

RNA chaperone that binds small regulatory RNA (sRNAs) and mRNAs to facilitate mRNA translational regulation in response to envelope stress, environmental stress and changes in metabolite concentrations. Also binds with high specificity to tRNAs. The protein is RNA-binding protein Hfq of Alkaliphilus metalliredigens (strain QYMF).